A 333-amino-acid chain; its full sequence is tRNA N6-adenosine threonylcarbamoyltransferase (333 aa).

Positions 110 and 114 each coordinate Fe cation. Substrate-binding positions include 133–137 (IVSGG), Asp-166, Gly-179, Asp-183, and Asn-275. Asp-302 is a binding site for Fe cation.

The protein belongs to the KAE1 / TsaD family. The cofactor is Fe(2+).

Its subcellular location is the cytoplasm. The catalysed reaction is L-threonylcarbamoyladenylate + adenosine(37) in tRNA = N(6)-L-threonylcarbamoyladenosine(37) in tRNA + AMP + H(+). Functionally, required for the formation of a threonylcarbamoyl group on adenosine at position 37 (t(6)A37) in tRNAs that read codons beginning with adenine. Is involved in the transfer of the threonylcarbamoyl moiety of threonylcarbamoyl-AMP (TC-AMP) to the N6 group of A37, together with TsaE and TsaB. TsaD likely plays a direct catalytic role in this reaction. This chain is tRNA N6-adenosine threonylcarbamoyltransferase, found in Thermodesulfovibrio yellowstonii (strain ATCC 51303 / DSM 11347 / YP87).